We begin with the raw amino-acid sequence, 480 residues long: Beta-amyrin 28-monooxygenase (480 aa).

The chain crosses the membrane as a helical span at residues 3-23 (VFFLSLLLICVLSVSIRLYLL). Cys427 serves as a coordination point for heme.

The protein belongs to the cytochrome P450 family. Requires heme as cofactor. In terms of tissue distribution, expressed in leaves, stems and fruit skin.

The protein localises to the membrane. It catalyses the reaction beta-amyrin + 3 reduced [NADPH--hemoprotein reductase] + 3 O2 = oleanolate + 3 oxidized [NADPH--hemoprotein reductase] + 4 H2O + 4 H(+). In terms of biological role, catalyzes the carboxylation of beta-amyrin at the C-28 position to form oleanolic acid. May be involved in saponin biosynthesis in fruit skin. This Vitis vinifera (Grape) protein is Beta-amyrin 28-monooxygenase.